Reading from the N-terminus, the 63-residue chain is Large ribosomal subunit protein uL29 (63 aa).

The protein belongs to the universal ribosomal protein uL29 family.

This Tolumonas auensis (strain DSM 9187 / NBRC 110442 / TA 4) protein is Large ribosomal subunit protein uL29.